A 344-amino-acid polypeptide reads, in one-letter code: Phenylalanine--tRNA ligase alpha subunit (344 aa).

Glutamate 256 serves as a coordination point for Mg(2+).

The protein belongs to the class-II aminoacyl-tRNA synthetase family. Phe-tRNA synthetase alpha subunit type 1 subfamily. In terms of assembly, tetramer of two alpha and two beta subunits. Mg(2+) is required as a cofactor.

It localises to the cytoplasm. The enzyme catalyses tRNA(Phe) + L-phenylalanine + ATP = L-phenylalanyl-tRNA(Phe) + AMP + diphosphate + H(+). The protein is Phenylalanine--tRNA ligase alpha subunit of Anoxybacillus flavithermus (strain DSM 21510 / WK1).